The primary structure comprises 565 residues: MWLCALSLISLTACLSLGHPSLPPVVHTVHGKVLGKYVTLEGFSQPVAVFLGVPFAKPPLGSLRFAPPEPAEPWSFVKHTTSYPPLCYQNPEAALRLAELFTNQRKIIPHKFSEDCLYLNIYTPADLTQNSRLPVMVWIHGGGLVIDGASTYDGVPLAVHENVVVVVIQYRLGIWGFFSTEDEHSRGNWGHLDQVAALHWVQDNIANFGGNPGSVTIFGESAGGESVSVLVLSPLAKNLFHRAIAQSSVIFNPCLFGRAARPLAKKIAALAGCKTTTSAAMVHCLRQKTEDELLEVSLKMKFGTVDFLGDPRESYPFLPTVIDGVLLPKAPEEILAEKSFNTVPYMVGINKHEFGWIIPMFLDFPLSERKLDQKTAASILWQAYPILNISEKLIPAAIEKYLGGTEDPATMTDLFLDLIGDIMFGVPSVIVSRSHRDAGAPTYMYEYQYRPSFVSDDRPQELLGDHADELFSVWGAPFLKEGASEEEINLSKMVMKFWANFARNGNPNGEGLPHWPEYDQKEGYLQIGVPAQAAHRLKDKEVDFWTELRAKETAERSSHREHVEL.

The signal sequence occupies residues 1-18 (MWLCALSLISLTACLSLG). Residues Cys87 and Cys116 are joined by a disulfide bond. Catalysis depends on Ser221, which acts as the Acyl-ester intermediate. A disulfide bond links Cys273 and Cys284. Glu353 acts as the Charge relay system in catalysis. Ser378 is subject to Phosphoserine. N-linked (GlcNAc...) asparagine glycosylation is present at Asn388. Residue His466 is the Charge relay system of the active site. The N-linked (GlcNAc...) asparagine glycan is linked to Asn489.

It belongs to the type-B carboxylesterase/lipase family. As to quaternary structure, homotrimer and homohexamer. Binds to beta-glucuronidase. As to expression, detected in kidney, liver and lung.

Its subcellular location is the endoplasmic reticulum lumen. It is found in the cytoplasm. It localises to the lipid droplet. The enzyme catalyses a carboxylic ester + H2O = an alcohol + a carboxylate + H(+). It carries out the reaction cholesteryl (9Z-octadecenoate) + H2O = cholesterol + (9Z)-octadecenoate + H(+). The catalysed reaction is 2-(5Z,8Z,11Z,14Z-eicosatetraenoyl)-glycerol + H2O = glycerol + (5Z,8Z,11Z,14Z)-eicosatetraenoate + H(+). It catalyses the reaction prostaglandin E2 1-glyceryl ester + H2O = prostaglandin E2 + glycerol + H(+). The enzyme catalyses a cholesterol ester + H2O = cholesterol + a fatty acid + H(+). It carries out the reaction prostaglandin F2alpha 1-glyceryl ester + H2O = prostaglandin F2alpha + glycerol + H(+). Involved in the detoxification of xenobiotics and in the activation of ester and amide prodrugs. Hydrolyzes aromatic and aliphatic esters, but has no catalytic activity toward amides or a fatty acyl-CoA ester. Displays fatty acid ethyl ester synthase activity, catalyzing the ethyl esterification of oleic acid to ethyloleate. Converts monoacylglycerides to free fatty acids and glycerol. Hydrolyzes of 2-arachidonoylglycerol and prostaglandins. Hydrolyzes cellular cholesteryl esters to free cholesterols and promotes reverse cholesterol transport (RCT) by facilitating both the initial and final steps in the process. First of all, allows free cholesterol efflux from macrophages to extracellular cholesterol acceptors and secondly, releases free cholesterol from lipoprotein-delivered cholesteryl esters in the liver for bile acid synthesis or direct secretion into the bile. In Mus musculus (Mouse), this protein is Liver carboxylesterase 1.